A 397-amino-acid polypeptide reads, in one-letter code: DnaJ homolog subfamily A member 1 (397 aa).

A J domain is found at 6–68 (TYYDVLGVKP…KKRELYDKGG (63 aa)). K66 bears the N6-acetyllysine mark. A Phosphoserine modification is found at S83. The CR-type zinc-finger motif lies at 121 to 205 (GATRKLALQK…CNGRKIVREK (85 aa)). Residues C134, C137, C150, C153, C177, C180, C193, and C196 each contribute to the Zn(2+) site. CXXCXGXG motif repeat units follow at residues 134–141 (CDKCEGRG), 150–157 (CPNCRGTG), 177–184 (CMECQGHG), and 193–200 (CKSCNGRK). S335 carries the phosphoserine modification. Positions 352–397 (VEETDEMDQVELVDFDPNQERRRHYNGEAYEDDEHHPRGGVQCQTS) are disordered. The segment covering 353 to 365 (EETDEMDQVELVD) has biased composition (acidic residues). Position 381 is a phosphotyrosine (Y381). C394 bears the Cysteine methyl ester mark. The S-farnesyl cysteine moiety is linked to residue C394. Positions 395-397 (QTS) are cleaved as a propeptide — removed in mature form.

Identified in a complex with HSPA1B and BAX. Interacts with RNF207.

It localises to the membrane. The protein localises to the cytoplasm. It is found in the microsome. Its subcellular location is the mitochondrion. The protein resides in the nucleus. It localises to the perinuclear region. Functionally, co-chaperone for HSPA8/Hsc70. Plays a role in protein transport into mitochondria via its role as co-chaperone. Stimulates ATP hydrolysis, but not the folding of unfolded proteins mediated by HSPA1A (in vitro). Promotes apoptosis in response to cellular stress mediated by exposure to anisomycin or UV. Functions as co-chaperone for HSPA1B and negatively regulates the translocation of BAX from the cytosol to mitochondria in response to cellular stress, thereby protecting cells against apoptosis. This chain is DnaJ homolog subfamily A member 1 (Dnaja1), found in Mus musculus (Mouse).